Here is a 361-residue protein sequence, read N- to C-terminus: Probable dual-specificity RNA methyltransferase RlmN (361 aa).

Glu-91 (proton acceptor) is an active-site residue. One can recognise a Radical SAM core domain in the interval 97–329 (QHYGLSVCVT…KKKGVNCVVR (233 aa)). Cys-104 and Cys-340 are disulfide-bonded. The [4Fe-4S] cluster site is built by Cys-111, Cys-115, and Cys-118. S-adenosyl-L-methionine-binding positions include 163–164 (GE), Ser-195, 218–220 (SLH), and Asn-296. Residue Cys-340 is the S-methylcysteine intermediate of the active site.

It belongs to the radical SAM superfamily. RlmN family. The cofactor is [4Fe-4S] cluster.

Its subcellular location is the cytoplasm. It catalyses the reaction adenosine(2503) in 23S rRNA + 2 reduced [2Fe-2S]-[ferredoxin] + 2 S-adenosyl-L-methionine = 2-methyladenosine(2503) in 23S rRNA + 5'-deoxyadenosine + L-methionine + 2 oxidized [2Fe-2S]-[ferredoxin] + S-adenosyl-L-homocysteine. The enzyme catalyses adenosine(37) in tRNA + 2 reduced [2Fe-2S]-[ferredoxin] + 2 S-adenosyl-L-methionine = 2-methyladenosine(37) in tRNA + 5'-deoxyadenosine + L-methionine + 2 oxidized [2Fe-2S]-[ferredoxin] + S-adenosyl-L-homocysteine. Functionally, specifically methylates position 2 of adenine 2503 in 23S rRNA and position 2 of adenine 37 in tRNAs. This chain is Probable dual-specificity RNA methyltransferase RlmN, found in Streptococcus pneumoniae serotype 19F (strain G54).